Here is a 199-residue protein sequence, read N- to C-terminus: Protein OPI10 homolog (199 aa).

Belongs to the OPI10 family.

The sequence is that of Protein OPI10 homolog from Aedes aegypti (Yellowfever mosquito).